Consider the following 976-residue polypeptide: Collagen alpha-1(I) chain (976 aa).

Phosphoserine is present on serine 1. Residues 1–976 form a disordered region; it reads SAGGISVPGP…PGPPGPPGPP (976 aa). Proline 20, proline 23, proline 26, proline 35, proline 38, proline 41, proline 55, proline 70, proline 76, proline 85, and proline 91 each carry 4-hydroxyproline. Residues 58-72 are compositionally biased toward basic and acidic residues; that stretch reads NGDDGEAGKPGRPGE. Lysine 94 bears the 5-hydroxylysine; alternate mark. Residue lysine 94 is glycosylated (O-linked (Gal...) hydroxylysine; alternate). Position 100 is a phosphoserine (serine 100). Low complexity-rich tracts occupy residues 108-118 and 132-150; these read DAGPAGPKGAP and PGASGPAGARGNDGATGAA. A 4-hydroxyproline mark is found at proline 118, proline 132, proline 153, proline 162, proline 165, proline 192, proline 195, proline 207, proline 213, proline 222, proline 228, proline 231, and proline 246. Positions 152 to 164 are enriched in pro residues; the sequence is PPGPTGPAGPPGF. The segment covering 198–237 has biased composition (low complexity); the sequence is AGAAGPAGNPGADGQPGAKGANGAPGIAGAPGFPGARGPS. At lysine 249 the chain carries 5-hydroxylysine. Residues proline 255, proline 258, proline 266, proline 275, proline 290, proline 296, proline 304, and proline 310 each carry the 4-hydroxyproline modification. Residues 294 to 308 are compositionally biased toward gly residues; it reads GLPGPGERGGPGSRG. Lysine 319 carries the 5-hydroxylysine modification. A 4-hydroxyproline mark is found at proline 328, proline 337, proline 343, proline 349, proline 358, proline 361, proline 370, proline 379, proline 385, proline 397, proline 406, proline 415, proline 418, proline 436, proline 453, proline 459, proline 465, proline 471, proline 477, proline 483, proline 495, proline 504, proline 517, proline 523, and proline 532. The segment covering 352-378 has biased composition (low complexity); the sequence is KGLTGSPGSPGPDGKTGPPGPAGQDGR. Residues 387–406 are compositionally biased toward low complexity; it reads ARGQAGVMGFPGPKGAAGEP. Over residues 465-474 the composition is skewed to low complexity; sequence PGEAGKPGEQ. The residue at position 544 (lysine 544) is a 5-hydroxylysine. 4-hydroxyproline is present on residues proline 550, proline 565, and proline 571. Positions 577 to 591 are enriched in low complexity; the sequence is SGPSGPAGPTGARGA. Residue serine 580 is modified to Phosphoserine. 8 positions are modified to 4-hydroxyproline: proline 592, proline 598, proline 601, proline 610, proline 616, proline 634, proline 643, and proline 652. Residues 604–631 show a composition bias toward low complexity; the sequence is AGFAGPPGADGQPGAKGEPGDAGAKGDA. Position 655 is a 5-hydroxylysine (lysine 655). Positions 660–676 are enriched in low complexity; the sequence is SAGPPGATGFPGAAGRV. 4-hydroxyproline is present on residues proline 664 and proline 670. Proline 678 carries the 3-hydroxyproline modification. Residues proline 679, proline 688, proline 691, proline 718, proline 726, proline 735, proline 753, proline 762, proline 765, proline 771, proline 786, proline 792, proline 798, proline 806, and proline 812 each carry the 4-hydroxyproline modification. Positions 723–735 are enriched in low complexity; sequence KGSPGADGPAGAP. Positions 785-795 are enriched in pro residues; sequence PPGPMGPPGLA. Lysine 821 carries the post-translational modification 5-hydroxylysine. Over residues 829–844 the composition is skewed to pro residues; it reads PGPPGAPGAPGAPGPV. Proline 832, proline 835, and proline 838 each carry 4-hydroxyproline. Residues 864-878 are compositionally biased toward low complexity; the sequence is AGPAGARGPAGPQGP. Positions 879–893 are enriched in basic and acidic residues; sequence RGDKGETGEQGDRGI. Position 882 is a 5-hydroxylysine (lysine 882). At lysine 894 the chain carries 5-hydroxylysine; alternate. Residue lysine 894 is glycosylated (O-linked (Gal...) hydroxylysine; alternate). 4-hydroxyproline occurs at positions 907, 910, 928, and 943. Positions 910 to 943 are enriched in low complexity; it reads PGEQGPSGASGPAGPRGPPGSAGSPGKDGLNGLP. Proline 948 is subject to 3-hydroxyproline. 4-hydroxyproline is present on proline 949. A compositionally biased stretch (pro residues) spans 961 to 976; the sequence is VGPPGPPGPPGPPGPP. At proline 963 the chain carries 3-hydroxyproline. Proline 964 is subject to 4-hydroxyproline. Proline 966 carries the post-translational modification 3-hydroxyproline. Proline 967 is subject to 4-hydroxyproline. The residue at position 969 (proline 969) is a 3-hydroxyproline. Residues proline 970, proline 973, and proline 976 each carry the 4-hydroxyproline modification.

The protein belongs to the fibrillar collagen family. In terms of assembly, trimers of one alpha 2(I) and two alpha 1(I) chains. Contains mostly 4-hydroxyproline. Proline residues at the third position of the tripeptide repeating unit (G-X-Y) are hydroxylated in some or all of the chains. In terms of processing, contains 3-hydroxyproline at a few sites. This modification occurs on the first proline residue in the sequence motif Gly-Pro-Hyp, where Hyp is 4-hydroxyproline. Post-translationally, lysine residues at the third position of the tripeptide repeating unit (G-X-Y) are 5-hydroxylated in some or all of the chains. O-glycosylated on hydroxylated lysine residues. The O-linked glycan consists of a Glc-Gal disaccharide. As to expression, expressed in bones.

The protein resides in the secreted. It localises to the extracellular space. It is found in the extracellular matrix. Functionally, type I collagen is a member of group I collagen (fibrillar forming collagen). This chain is Collagen alpha-1(I) chain, found in Acratocnus ye (Hispaniolan ground sloth).